The sequence spans 144 residues: Glycophorin-A (144 aa).

Residues 1 to 25 (SSTTVPATHTSSSSLGPEQYVSSQS) are compositionally biased toward polar residues. The tract at residues 1–55 (SSTTVPATHTSSSSLGPEQYVSSQSNDKHTSDSHPTPTSAHEVTTEFSGRTHYPP) is disordered. The O-linked (GalNAc...) serine glycan is linked to S2. 4 O-linked (GalNAc...) threonine glycosylation sites follow: T3, T4, T8, and T10. Residues S11, S12, S13, S14, S22, and S23 are each glycosylated (O-linked (GalNAc...) serine). Residues T30, T36, T38, T44, and T45 are each glycosylated (O-linked (GalNAc...) threonine). The segment covering 33–48 (SHPTPTSAHEVTTEFS) has biased composition (polar residues). The O-linked (GalNAc...) serine glycan is linked to S48. The O-linked (GalNAc...) threonine glycan is linked to T51. The chain crosses the membrane as a helical span at residues 70-92 (LVIALIIFGVMAGVIGTILFISY). The segment at 101-144 (SESDVQPLPPPDAEVPLSSVEIEDPEETDELNSFTKPNQERNES) is disordered. The residue at position 118 (S118) is a Phosphoserine. Acidic residues predominate over residues 121-130 (EIEDPEETDE).

This sequence belongs to the glycophorin-A family. In terms of assembly, homodimer. Component of the ankyrin-1 complex in the erythrocyte, composed of ANK1, RHCE, RHAG, SLC4A1, EPB42, GYPA, GYPB and AQP1. Interacts with SLC4A1; a GYPA monomer is bound at each end of the SLC4A1 dimer forming a heterotetramer.

It localises to the membrane. Functionally, component of the ankyrin-1 complex, a multiprotein complex involved in the stability and shape of the erythrocyte membrane. Glycophorin A is the major intrinsic membrane protein of the erythrocyte. The N-terminal glycosylated segment, which lies outside the erythrocyte membrane, has MN blood group receptors. Appears to be important for the function of SLC4A1 and is required for high activity of SLC4A1. May be involved in translocation of SLC4A1 to the plasma membrane. The protein is Glycophorin-A of Macaca fuscata fuscata (Japanese macaque).